The following is a 470-amino-acid chain: uncharacterized protein (470 aa).

A signal peptide spans 1–24 (MKKLVGSLAAISVLSATGFSYVGY).

This is an uncharacterized protein from Mycoplasma capricolum subsp. capricolum (strain California kid / ATCC 27343 / NCTC 10154).